Consider the following 1848-residue polypeptide: Chitin synthase E (1848 aa).

Over residues 1–17 (MAAPSPAGGAPSHAQSS) the composition is skewed to low complexity. The segment at 1-22 (MAAPSPAGGAPSHAQSSLPSLP) is disordered. In terms of domain architecture, Myosin motor spans 1–779 (MAAPSPAGGA…CWADLAKVGE (779 aa)). 102–109 (GESGSGKT) serves as a coordination point for ATP. The interval 593-621 (SSKPLRMPSMARRKTSPSSRLAFDAGDAD) is disordered. An actin-binding region spans residues 659-683 (LDIVNKCLSSTNLNPYFIFCLKPND). Helical transmembrane passes span 889-909 (WIAL…KLFG) and 928-948 (LIIW…PGLV). One can recognise a Cytochrome b5 heme-binding domain in the interval 952-1040 (QHVYSAAELS…LLDYRPTNIS (89 aa)). N-linked (GlcNAc...) asparagine glycosylation is found at asparagine 1038 and asparagine 1063. Residues 1200-1220 (FILAISVLICSIIVFKFLAAL) form a helical membrane-spanning segment. 3 N-linked (GlcNAc...) asparagine glycosylation sites follow: asparagine 1423, asparagine 1457, and asparagine 1563. 3 helical membrane passes run 1595 to 1615 (LSTV…YWLV), 1621 to 1641 (IPYT…LIFI), and 1648 to 1668 (MVGW…ALPL). A glycan (N-linked (GlcNAc...) asparagine) is linked at asparagine 1786. The DEK-C domain maps to 1790 to 1845 (LPSDDAILAEIREILRTADLMSVTKKSIKLELERRFGVNLDLKRPYINSATEAVLA).

The protein in the N-terminal section; belongs to the TRAFAC class myosin-kinesin ATPase superfamily. Myosin family. This sequence in the C-terminal section; belongs to the chitin synthase family. Class V subfamily.

It localises to the cell membrane. The protein resides in the cell septum. It is found in the cell tip. The catalysed reaction is [(1-&gt;4)-N-acetyl-beta-D-glucosaminyl](n) + UDP-N-acetyl-alpha-D-glucosamine = [(1-&gt;4)-N-acetyl-beta-D-glucosaminyl](n+1) + UDP + H(+). Functionally, polymerizes chitin, a structural polymer of the cell wall and septum, by transferring the sugar moiety of UDP-GlcNAc to the non-reducing end of the growing chitin polymer. Important for hyphal growth and conidiophore development but not pathogenicity. In Aspergillus fumigatus (strain ATCC MYA-4609 / CBS 101355 / FGSC A1100 / Af293) (Neosartorya fumigata), this protein is Chitin synthase E.